The primary structure comprises 171 residues: Adenine phosphoribosyltransferase (171 aa).

Belongs to the purine/pyrimidine phosphoribosyltransferase family. In terms of assembly, homodimer.

It localises to the cytoplasm. It catalyses the reaction AMP + diphosphate = 5-phospho-alpha-D-ribose 1-diphosphate + adenine. It functions in the pathway purine metabolism; AMP biosynthesis via salvage pathway; AMP from adenine: step 1/1. Its function is as follows. Catalyzes a salvage reaction resulting in the formation of AMP, that is energically less costly than de novo synthesis. The chain is Adenine phosphoribosyltransferase from Shouchella clausii (strain KSM-K16) (Alkalihalobacillus clausii).